The following is a 503-amino-acid chain: UDP-N-acetylmuramate--L-alanine ligase (503 aa).

An ATP-binding site is contributed by 120-126 (GTHGKTS).

This sequence belongs to the MurCDEF family.

Its subcellular location is the cytoplasm. The catalysed reaction is UDP-N-acetyl-alpha-D-muramate + L-alanine + ATP = UDP-N-acetyl-alpha-D-muramoyl-L-alanine + ADP + phosphate + H(+). It functions in the pathway cell wall biogenesis; peptidoglycan biosynthesis. Cell wall formation. The polypeptide is UDP-N-acetylmuramate--L-alanine ligase (Rhodococcus jostii (strain RHA1)).